A 265-amino-acid polypeptide reads, in one-letter code: Basic leucine zipper 6 (265 aa).

2 disordered regions span residues 1-24 and 77-139; these read MAQL…SAGG and LMSM…RDPK. A compositionally biased stretch (low complexity) spans 85 to 97; it reads GGSSAPGSDNGGS. Residues 122 to 132 are compositionally biased toward polar residues; that stretch reads TQEQAAATSPT. The bZIP domain occupies 137-189; it reads DPKRVKRILANRQSAQRSRVRKLQYISELERSVTTLQNEVSVLSPRVAFLDQQ. Residues 139 to 158 form a basic motif region; the sequence is KRVKRILANRQSAQRSRVRK. The segment at 165-186 is leucine-zipper; sequence LERSVTTLQNEVSVLSPRVAFL. The disordered stretch occupies residues 239–265; that stretch reads LSGGLAADHAHVHGGPPPVRAEKELMS.

In terms of tissue distribution, expressed in roots, shoots and panicles.

The protein localises to the nucleus. In terms of biological role, transcription regulator. The chain is Basic leucine zipper 6 (BZIP06) from Oryza sativa subsp. japonica (Rice).